The sequence spans 208 residues: ATP-dependent Clp protease proteolytic subunit (208 aa).

The active-site Nucleophile is Ser107. His132 is an active-site residue.

It belongs to the peptidase S14 family. Fourteen ClpP subunits assemble into 2 heptameric rings which stack back to back to give a disk-like structure with a central cavity, resembling the structure of eukaryotic proteasomes.

The protein resides in the cytoplasm. The enzyme catalyses Hydrolysis of proteins to small peptides in the presence of ATP and magnesium. alpha-casein is the usual test substrate. In the absence of ATP, only oligopeptides shorter than five residues are hydrolyzed (such as succinyl-Leu-Tyr-|-NHMec, and Leu-Tyr-Leu-|-Tyr-Trp, in which cleavage of the -Tyr-|-Leu- and -Tyr-|-Trp bonds also occurs).. In terms of biological role, cleaves peptides in various proteins in a process that requires ATP hydrolysis. Has a chymotrypsin-like activity. Plays a major role in the degradation of misfolded proteins. This is ATP-dependent Clp protease proteolytic subunit from Methylorubrum populi (strain ATCC BAA-705 / NCIMB 13946 / BJ001) (Methylobacterium populi).